Reading from the N-terminus, the 192-residue chain is Protein GrpE (192 aa).

Residues Met1 to Cys34 form a disordered region. A compositionally biased stretch (polar residues) spans Thr20 to Thr31.

This sequence belongs to the GrpE family. In terms of assembly, homodimer.

It localises to the cytoplasm. Participates actively in the response to hyperosmotic and heat shock by preventing the aggregation of stress-denatured proteins, in association with DnaK and GrpE. It is the nucleotide exchange factor for DnaK and may function as a thermosensor. Unfolded proteins bind initially to DnaJ; upon interaction with the DnaJ-bound protein, DnaK hydrolyzes its bound ATP, resulting in the formation of a stable complex. GrpE releases ADP from DnaK; ATP binding to DnaK triggers the release of the substrate protein, thus completing the reaction cycle. Several rounds of ATP-dependent interactions between DnaJ, DnaK and GrpE are required for fully efficient folding. The polypeptide is Protein GrpE (Yersinia pseudotuberculosis serotype I (strain IP32953)).